We begin with the raw amino-acid sequence, 39 residues long: Natriuretic peptide TNPc (39 aa).

C9 and C25 are joined by a disulfide.

It belongs to the natriuretic peptide family. In terms of tissue distribution, expressed by the venom gland.

It is found in the secreted. Its function is as follows. Snake venom natriuretic peptide that exhibits vasoactive and hypotensive activity. Produces a near complete relaxation in pre-contracted aortae by activating the natriuretic peptide receptor 1 (NPR1). Stimulates cGMP production through the natriuretic peptide receptor 1 (NPR1) with high potencies for the rat NPR1 (EC(50)=100 nM), and very weak potencies over human NPR1 (28% activation at 10 uM). In vivo, reduces both systolic and diastolic blood pressure with no effect on heart rate, when intravenously injected in conscious rabbits. Also enhances the bradycardia due to cardiac afferent stimulation (Bezold-Jarisch reflex). This chain is Natriuretic peptide TNPc, found in Oxyuranus microlepidotus (Inland taipan).